Reading from the N-terminus, the 204-residue chain is ATP-dependent Clp protease proteolytic subunit (204 aa).

Ser101 acts as the Nucleophile in catalysis. Residue His126 is part of the active site.

This sequence belongs to the peptidase S14 family. As to quaternary structure, component of the chloroplastic Clp protease core complex.

Its subcellular location is the plastid. It localises to the chloroplast stroma. It catalyses the reaction Hydrolysis of proteins to small peptides in the presence of ATP and magnesium. alpha-casein is the usual test substrate. In the absence of ATP, only oligopeptides shorter than five residues are hydrolyzed (such as succinyl-Leu-Tyr-|-NHMec, and Leu-Tyr-Leu-|-Tyr-Trp, in which cleavage of the -Tyr-|-Leu- and -Tyr-|-Trp bonds also occurs).. In terms of biological role, cleaves peptides in various proteins in a process that requires ATP hydrolysis. Has a chymotrypsin-like activity. Plays a major role in the degradation of misfolded proteins. The chain is ATP-dependent Clp protease proteolytic subunit from Phalaenopsis aphrodite subsp. formosana (Moth orchid).